The sequence spans 371 residues: Cytochrome b (371 aa).

The next 4 membrane-spanning stretches (helical) occupy residues 25–45 (FGSM…FLAI), 69–90 (WTMQ…YIHI), 105–125 (WLSG…GYVL), and 170–190 (FFAL…AHIM). Histidine 75 and histidine 89 together coordinate heme b. Heme b-binding residues include histidine 174 and histidine 188. Position 193 (histidine 193) interacts with a ubiquinone. The next 4 helical transmembrane spans lie at 218–238 (NKDM…LSFL), 280–300 (LGGT…PFTH), 312–332 (MTQT…WTAT), and 339–358 (FMFI…FMNP).

This sequence belongs to the cytochrome b family. In terms of assembly, the cytochrome bc1 complex contains 3 respiratory subunits (MT-CYB, CYC1 and UQCRFS1), 2 core proteins (UQCRC1 and UQCRC2) and probably 6 low-molecular weight proteins. Heme b serves as cofactor.

The protein resides in the mitochondrion inner membrane. In terms of biological role, component of the ubiquinol-cytochrome c reductase complex (complex III or cytochrome b-c1 complex) that is part of the mitochondrial respiratory chain. The b-c1 complex mediates electron transfer from ubiquinol to cytochrome c. Contributes to the generation of a proton gradient across the mitochondrial membrane that is then used for ATP synthesis. The chain is Cytochrome b (MT-CYB) from Elapsoidea nigra (Usambara garter snake).